The following is an 84-amino-acid chain: Large ribosomal subunit protein bL27 (84 aa).

The segment at 1–25 (MSHKKAGGSTRNGRDSNAQRRGVKK) is disordered.

It belongs to the bacterial ribosomal protein bL27 family.

The sequence is that of Large ribosomal subunit protein bL27 from Desulforapulum autotrophicum (strain ATCC 43914 / DSM 3382 / VKM B-1955 / HRM2) (Desulfobacterium autotrophicum).